Here is a 168-residue protein sequence, read N- to C-terminus: uncharacterized protein (168 aa).

Positions 14 to 168 (IDIPLLDAAS…EYKHWIYVTK (155 aa)) constitute an N-acetyltransferase domain.

The protein belongs to the acetyltransferase family.

This is an uncharacterized protein from Bacillus subtilis (strain 168).